The primary structure comprises 79 residues: MAAHKMSLTSLFFVSIVIVLSLFSGFGEGRYIKYRAIAKDRVPDCTQDPKNCVRVPVNQYHLPPGCQNTTHCYREKYHI.

The signal sequence occupies residues Met-1 to Gly-29. 2 cysteine pairs are disulfide-bonded: Cys-45-Cys-52 and Cys-66-Cys-72. An N-linked (GlcNAc...) asparagine glycan is attached at Asn-68.

The protein belongs to the plant rapid alkalinization factor (RALF) family.

The protein localises to the secreted. Cell signaling peptide that may regulate plant stress, growth, and development. Mediates a rapid alkalinization of extracellular space by mediating a transient increase in the cytoplasmic Ca(2+) concentration leading to a calcium-dependent signaling events through a cell surface receptor and a concomitant activation of some intracellular mitogen-activated protein kinases. In Arabidopsis thaliana (Mouse-ear cress), this protein is Protein RALF-like 35.